Reading from the N-terminus, the 621-residue chain is Polycystin-2-like protein 2 (621 aa).

Topologically, residues methionine 1–glutamate 31 are cytoplasmic. The chain crosses the membrane as a helical span at residues leucine 32 to proline 52. At histidine 53–tyrosine 277 the chain is on the extracellular side. N-linked (GlcNAc...) asparagine glycosylation is found at asparagine 115 and asparagine 138. A helical membrane pass occupies residues tyrosine 278–isoleucine 298. Residues glutamine 299–serine 314 are Cytoplasmic-facing. A helical transmembrane segment spans residues valine 315–alanine 335. The Extracellular segment spans residues tyrosine 336–phenylalanine 360. A helical transmembrane segment spans residues leucine 361–isoleucine 381. Residues lysine 382–aspartate 406 lie on the Cytoplasmic side of the membrane. The helical transmembrane segment at isoleucine 407–leucine 427 threads the bilayer. Over valine 428–proline 468 the chain is Extracellular. Residues isoleucine 469 to isoleucine 489 traverse the membrane as a helical segment. Over isoleucine 490 to histidine 621 the chain is Cytoplasmic. A coiled-coil region spans residues asparagine 521–aspartate 551.

Belongs to the polycystin family. As to quaternary structure, interacts with TRPC1 and TRPC5. In terms of tissue distribution, expressed only in testis and heart.

It localises to the membrane. Functionally, exhibits a lower single conductance but no spontaneous channel activity. May function as a regulator of calcium channels or a channel component involving Ca2(+) homeostasis. This is Polycystin-2-like protein 2 from Mus musculus (Mouse).